Here is a 4059-residue protein sequence, read N- to C-terminus: Fibrocystin (4059 aa).

Positions 1-18 are cleaved as a signal peptide; it reads MMLAWLVSLLSMEVLLLA. At 19–3851 the chain is on the extracellular side; it reads KPYSSFQFEP…LPVASKERST (3833 aa). The IPT/TIG 1; atypical domain occupies 25–109; it reads QFEPAEGSLA…AGPYSLEMRS (85 aa). Residues asparagine 55 and asparagine 224 are each glycosylated (N-linked (GlcNAc...) asparagine). IPT/TIG domains follow at residues 135–230 and 257–333; these read PVLY…FSVF and PEIL…FEVG. A PA14 domain is found at 323–483; it reads AGNRGLRFEV…TWLNPDVVNT (161 aa). N-linked (GlcNAc...) asparagine glycosylation is found at asparagine 355, asparagine 385, asparagine 518, asparagine 527, asparagine 620, asparagine 639, asparagine 709, asparagine 867, asparagine 965, asparagine 975, asparagine 1082, asparagine 1114, asparagine 1133, asparagine 1239, asparagine 1273, asparagine 1308, asparagine 1319, asparagine 1344, asparagine 1373, asparagine 1456, asparagine 1471, asparagine 1528, asparagine 1613, asparagine 1627, asparagine 1694, asparagine 1760, asparagine 1775, asparagine 1875, asparagine 1879, asparagine 1915, asparagine 1955, asparagine 2030, and asparagine 2139. IPT/TIG domains lie at 945-997 and 1017-1100; these read LVHF…FMLV and PRLD…AFTY. An IPT/TIG 6; atypical domain is found at 1106–1190; the sequence is PVIVSLSRNR…IRSQGVDLYI (85 aa). Residues 1198-1266 form the IPT/TIG 7 domain; it reads SVEPCSGSLL…RADVLTVLAS (69 aa). In terms of domain architecture, IPT/TIG 8; atypical spans 1297–1378; sequence PVVTAMWGEF…MGFANMSVVP (82 aa). The 82-residue stretch at 1385–1466 folds into the IPT/TIG 9 domain; the sequence is PQIIAIFPTH…ITVLVNGLTS (82 aa). IPT/TIG domains follow at residues 1482 to 1566 and 1569 to 1637; these read PIVD…RNFF and PQVL…IDVN. Residues 1654–1738 form the IPT/TIG 12; atypical domain; sequence PELLSVSRSQ…VLRATVTSVT (85 aa). The region spanning 1928–2049 is the G8 1 domain; it reads HSWFPQRVPH…PEVTVTYLQA (122 aa). 2 PbH1 repeats span residues 2244-2266 and 2287-2321; these read TWGL…LLGS and EQGS…YTFS. Asparagine 2380 carries N-linked (GlcNAc...) asparagine glycosylation. 2 PbH1 repeats span residues 2404-2426 and 2459-2481; these read SNNL…DILE and RWEL…AIRT. Residues asparagine 2466, asparagine 2503, asparagine 2529, asparagine 2547, asparagine 2581, asparagine 2589, asparagine 2627, asparagine 2747, and asparagine 2762 are each glycosylated (N-linked (GlcNAc...) asparagine). The 127-residue stretch at 2741–2867 folds into the G8 2 domain; sequence KGWGGYNHTI…PKKSWVHLGA (127 aa). 2 PbH1 repeats span residues 3004-3026 and 3027-3049; these read SAGS…HASS and SHGV…DVEG. Asparagine 3051 carries an N-linked (GlcNAc...) asparagine glycan. The PbH1 7 repeat unit spans residues 3080-3102; that stretch reads AEDIILHGNVVAGSERLGFHVGG. N-linked (GlcNAc...) asparagine glycans are attached at residues asparagine 3133 and asparagine 3162. Residues 3188–3212 form a PbH1 8 repeat; it reads TVQITLRNSVIVATSSSFDCIHDRK. 3 N-linked (GlcNAc...) asparagine glycosylation sites follow: asparagine 3218, asparagine 3719, and asparagine 3831. The chain crosses the membrane as a helical span at residues 3852-3872; the sequence is IILALSLCSVASWVALSCLVC. Positions 3869-3886 are ciliary targeting sequence (CST); it reads CLVCCWFKKSKTRKIKPE. The Cytoplasmic portion of the chain corresponds to 3873–4059; that stretch reads CWFKKSKTRK…LHTAPPETIQ (187 aa). Positions 3885-3898 are enriched in basic and acidic residues; sequence PEDISESQAKEQKK. The disordered stretch occupies residues 3885–3915; it reads PEDISESQAKEQKKNTHNSSKPRGLQAKTAK. Residues 3946–3970 form a nuclear localization signal (NLS) region; the sequence is KRKVSRLAVTEERTTTPAPKIPRIT. The tract at residues 4015–4038 is disordered; it reads QERKQGQEPSQLDKGSDCTGLSQE.

In terms of assembly, interacts with CAMLG. Interacts with PKD2. Interacts (via CST) with ARF4; this interaction allows an efficient PKHD1 trafficking to the cilium. Interacts (via CST) with RAB8A; this interaction controls trafficking through the endomembrane systeme and to the cilium. Interacts (via CST) with TULP3; this interaction allows PKHD1 trafficking to the cilium. In terms of processing, palmitoylated. Palmitoylation facilitates the trafficking to the cilia and membrane targeting. Post-translationally, N-glycosylated. Several proteolytic cleavages occur within the extracellular domain, whereas at least one cleavage occurs within the cytoplasmic domain. Cleaved by a probable proprotein convertase which produces an extracellular domain (polyductin extracellular domain, (PECD)) and a C-terminal fragment (polyductin transmembrane fragment (PTM)) which are tethered together by disulfide bonds. This extracellular domain (PECD) is then shed from the primary cilium by activation of a member of the ADAM metalloproteinase disintegrins family, resulting in concomitant release of an intra-cellular C-terminal fragment (ICD) via a gamma-secretase-dependent process. The proteolytic cleavage of the C-terminal intracellular fragment (ICD) is controlled by cytosolic calcium concentration and activation of PKC. In terms of tissue distribution, expressed in bile ducts and distal nephron segments but is absent from the proximal tubule. Expressed in pancreas and kidney but also in the liver. Expressed primarily in the distal tubule and thick ascending limb of the loop of Henle, and at low-level in the proximal tubule before renal development is complete at P0.

The protein resides in the cell membrane. Its subcellular location is the cytoplasm. It localises to the apical cell membrane. It is found in the cytoskeleton. The protein localises to the cilium basal body. The protein resides in the cell projection. Its subcellular location is the cilium. It localises to the spindle. It is found in the chromosome. The protein localises to the centromere. The protein resides in the nucleus. Its subcellular location is the secreted. It localises to the extracellular exosome. It is found in the endoplasmic reticulum. The protein localises to the golgi apparatus. Functionally, promotes ciliogenesis in renal epithelial cells and therefore participates in the tubules formation and/or ensures the maintenance of the architecture of the lumen of the kidney. Has an impact on cellular symmetry by ensuring correct bipolar cell division through the regulation of centrosome duplication and mitotic spindle assembly and by maintaining oriented cell division (OCD) during tubular elongation through planar cell polarity (PCP) pathway. During epithelial cell morphogenesis, it also regulates cell-cell and cell-matrix adhesion and participates in cell motility. Promotes cell-cell contact through the positive regulation of PTK2 kinase activity leading to either positive regulation of epithelial cell proliferation through the HRAS/RAF1 pathways, or negative regulation of apoptosis through the PDK1/AKT1 pathway. May act in collecting-duct and biliary differentiation. May participate in the regulation of the cholangiocytes proliferation and the CCN2 production in an CXCL8-dependent manner. This chain is Fibrocystin, found in Mus musculus (Mouse).